The following is a 357-amino-acid chain: Queuosine-tRNA galactosyltransferase (357 aa).

The protein belongs to the glycosyltransferase 2 family.

It localises to the cytoplasm. It catalyses the reaction queuosine(34) in tRNA(Tyr) + UDP-alpha-D-galactose = O-5''-beta-D-galactosylqueuosine(34) in tRNA(Tyr) + UDP + H(+). Functionally, glycosyltransferase that specifically catalyzes galactosylation of cytoplasmic tRNA(Tyr) modified with queuosine at position 34 (queuosine(34)). Galactosylates the cyclopentene hydroxyl group of queuosine(34) in tRNA(Tyr) to form galactosyl-queuosine(34). Mannosylation of queuosine(34) in tRNA(Tyr) is required to slow-down elongation at cognate codons UAC and suppress stop codon readthrough, thereby regulating protein translation. This chain is Queuosine-tRNA galactosyltransferase, found in Mus musculus (Mouse).